Here is a 232-residue protein sequence, read N- to C-terminus: ATP-dependent dethiobiotin synthetase BioD (232 aa).

ATP is bound at residue 16–21 (GVGKTV). Thr-20 serves as a coordination point for Mg(2+). Lys-41 is a catalytic residue. Thr-45 lines the substrate pocket. ATP-binding positions include Asp-52, 111 to 114 (EGIG), 171 to 172 (NQ), 200 to 202 (PLS), and Glu-207. The Mg(2+) site is built by Asp-52 and Glu-111.

Belongs to the dethiobiotin synthetase family. In terms of assembly, homodimer. It depends on Mg(2+) as a cofactor.

The protein resides in the cytoplasm. The enzyme catalyses (7R,8S)-7,8-diammoniononanoate + CO2 + ATP = (4R,5S)-dethiobiotin + ADP + phosphate + 3 H(+). The catalysed reaction is (7R,8S)-8-amino-7-(carboxyamino)nonanoate + ATP = (4R,5S)-dethiobiotin + ADP + phosphate + H(+). It functions in the pathway cofactor biosynthesis; biotin biosynthesis; biotin from 7,8-diaminononanoate: step 1/2. Its function is as follows. Catalyzes a mechanistically unusual reaction, the ATP-dependent insertion of CO2 between the N7 and N8 nitrogen atoms of 7,8-diaminopelargonic acid (DAPA, also called 7,8-diammoniononanoate) to form a ureido ring. This archaea does not encode bioA (which catalyzes the formation of the precursor for this reaction in the cannonical pathway), instead it encodes bioU, which replaces bioA and also performs the first half of the cannonical BioD reaction. Thus in this archaea BioD has a different substrate. The protein is ATP-dependent dethiobiotin synthetase BioD of Haloferax mediterranei (strain ATCC 33500 / DSM 1411 / JCM 8866 / NBRC 14739 / NCIMB 2177 / R-4) (Halobacterium mediterranei).